The following is a 170-amino-acid chain: Double homeobox protein 1 (170 aa).

DNA-binding regions (homeobox) lie at residues 19–78 and 94–153; these read GRRM…LRQH and GRRK…RGQS. The interval 75–100 is disordered; it reads LRQHRRQSRPWPGRRDPQKGRRKRTA.

Belongs to the paired homeobox family. Expressed in rhabdomyosarcoma TE671 cells as well as in several other normal and cancer cells.

It is found in the nucleus. In terms of biological role, probable transcription activator. Binds the P5 DNA element sequence 5'-GATCTGAGTCTAATTGAGAATTACTGTAC-3'. This is Double homeobox protein 1 (DUX1) from Homo sapiens (Human).